The sequence spans 345 residues: Thylakoid lumenal 29 kDa protein, chloroplastic (345 aa).

The protein belongs to the peroxidase family.

It localises to the plastid. The protein resides in the chloroplast thylakoid lumen. This Solanum lycopersicum (Tomato) protein is Thylakoid lumenal 29 kDa protein, chloroplastic (CLEB3J9).